Here is a 272-residue protein sequence, read N- to C-terminus: RELT-like protein 1 (272 aa).

Residues 1–23 (MALWGLPGSAVLAASVFVGGAVS) form the signal peptide. Residues 24-58 (SPLVAADNTGSHTLHSRAETTPSSPTNNPGNGHPE) lie on the Extracellular side of the membrane. A disordered region spans residues 33–52 (GSHTLHSRAETTPSSPTNNP). Residues 59–79 (YIAYVLVPVFFVMGLLGVLIC) traverse the membrane as a helical segment. The Cytoplasmic segment spans residues 80-272 (HLLKKKGYRC…PVKRERSDTE (193 aa)). A coiled-coil region spans residues 90-114 (TTEAEQEVEEEKVEKIELNDSINEN). Phosphoserine occurs at positions 110 and 115. 2 disordered regions span residues 146–171 (DIES…PGAT) and 235–272 (EHKS…SDTE). A compositionally biased stretch (pro residues) spans 156-166 (PGSPPVSPGPL). The segment covering 235 to 245 (EHKSNQKERRS) has biased composition (basic and acidic residues). Phosphoserine occurs at positions 245 and 248.

This sequence belongs to the RELT family. Interacts with RELT, RELL2, OXSR1 and PLSCR1.

It is found in the cell membrane. In terms of biological role, induces activation of MAPK14/p38 cascade, when overexpressed. Induces apoptosis, when overexpressed. The protein is RELT-like protein 1 (Rell1) of Mus musculus (Mouse).